Reading from the N-terminus, the 451-residue chain is Velvet complex subunit 2 (451 aa).

3 disordered regions span residues 1–95, 205–312, and 426–451; these read MNTT…PRSI, PGQS…QTNP, and PIRKDGKDGPGKGGKDGSRGDDDDDY. 3 stretches are compositionally biased toward polar residues: residues 18 to 28, 40 to 62, and 205 to 217; these read TMPSLHDTTYR, MPQTMASQHSTISAYEQYNNSLP, and PGQSQREPTSPTY. Positions 92-428 constitute a Velvet domain; it reads PRSITVDGRK…ATQGIKIPIR (337 aa). Over residues 267–283 the composition is skewed to low complexity; the sequence is PQQSNYYYPQPSQSIPS. The segment covering 427-445 has biased composition (basic and acidic residues); it reads IRKDGKDGPGKGGKDGSRG.

Belongs to the velvet family. VelB subfamily. As to quaternary structure, component of the heterotrimeric velvet complex composed of LAE1, VEL1 and VEL2; VEL1 acting as a bridging protein between LAE1 and VEL2. Forms a heterodimeric complex with VOS1; the formation of the VEL2-VOS1 complex is light-dependent.

It localises to the nucleus. The protein resides in the cytoplasm. Functionally, component of the velvet transcription factor complex that controls sexual/asexual developmental ratio in response to light, promoting sexual development in the darkness while stimulating asexual sporulation under illumination. The velvet complex acts as a global regulator for secondary metabolite gene expression. Component of the VEL2-VOS1 heterodimeric complex that plays a dual role in activating genes associated with spore maturation and repressing certain development-associated genes. The VEL2-VOS1 complex binds DNA through the DNA-binding domain of VOS1 that recognizes an 11-nucleotide consensus sequence 5'-CTGGCCGCGGC-3' consisting of two motifs in the promoters of key developmental regulatory genes. Controls the expression of the oxalic acid and melanin gene clusters. Involved in the resistance to oxidative stress. Required for full virulence. In Botryotinia fuckeliana (strain B05.10) (Noble rot fungus), this protein is Velvet complex subunit 2.